Consider the following 153-residue polypeptide: Proline-rich membrane anchor 1 (153 aa).

Residues methionine 1–alanine 35 form the signal peptide. Residues glutamate 36–glycine 92 are Extracellular-facing. Residues proline 56 to proline 70 form the PRAD domain. The segment covering proline 59–arginine 71 has biased composition (pro residues). Positions proline 59–asparagine 79 are disordered. An N-linked (GlcNAc...) asparagine glycan is attached at asparagine 79. A helical membrane pass occupies residues leucine 93–isoleucine 113. Topologically, residues cysteine 114–valine 153 are cytoplasmic. The tract at residues alanine 133–valine 153 is disordered.

Interacts with ACHE, probably through disulfide bonds. In terms of tissue distribution, isoforms 1 and 2 are expressed in the adult brain. In matured cortical neurons, only isoform 1 is detectable.

Its subcellular location is the cell membrane. The protein localises to the cell junction. It localises to the synapse. Required to anchor acetylcholinesterase (ACHE) to the basal lamina of the neuromuscular junction and to the membrane of neuronal synapses in brain. Organizes ACHE into tetramers. This is Proline-rich membrane anchor 1 (Prima1) from Rattus norvegicus (Rat).